The following is a 500-amino-acid chain: Sodium/potassium/calcium exchanger 5 (500 aa).

The first 29 residues, 1–29 (MQTKGGQTWARRALLLGILWATAHLPLSG), serve as a signal peptide directing secretion. Topologically, residues 30–66 (TSLPQRLPRATGNSTQCVISPSSEFPEGFFTRQERRD) are extracellular. A helical transmembrane segment spans residues 67 to 87 (GGIIIYFLIIVYMFMAISIVC). The Cytoplasmic segment spans residues 88 to 111 (DEYFLPSLEIISESLGLSQDVAGT). A helical transmembrane segment spans residues 112-132 (TFMAAGSSAPELVTAFLGVFI). The Extracellular segment spans residues 133–136 (TKGD). The helical transmembrane segment at 137–157 (IGISTILGSAIYNLLGICAAC) threads the bilayer. Residues 158 to 169 (GLLSNTVSTLSC) lie on the Cytoplasmic side of the membrane. The helical transmembrane segment at 170–190 (WPLFRDCAAYTISAAAVLGII) threads the bilayer. At 191–195 (YDNQV) the chain is on the extracellular side. The helical transmembrane segment at 196–216 (YWYEGALLLLIYGLYVLVLCF) threads the bilayer. The Cytoplasmic portion of the chain corresponds to 217-302 (DIKINQYIIK…PSVFNMPEAD (86 aa)). A helical transmembrane segment spans residues 303–323 (LKRIFWVLSLPIITLLFLTTP). At 324–333 (DCRKKFWKNY) the chain is on the extracellular side. Residues 334–354 (FVITFFMSAIWISAFTYILVW) form a helical membrane-spanning segment. Residues 355–368 (MVTITGETLEIPDT) lie on the Cytoplasmic side of the membrane. The helical transmembrane segment at 369-389 (VMGLTLLAAGTSIPDTIASVL) threads the bilayer. Over 390-399 (VARKGKGDMA) the chain is Extracellular. A helical membrane pass occupies residues 400-420 (MSNIVGSNVFDMLCLGIPWFI). Residues 421 to 437 (KTAFINGSAPAEVNSRG) are Cytoplasmic-facing. A helical membrane pass occupies residues 438 to 458 (LTYITISLNISIIFLFLAVHF). At 459-468 (NGWKLDRKLG) the chain is on the extracellular side. The chain crosses the membrane as a helical span at residues 469-489 (IVCLLSYLGLATLSVLYELGI). Topologically, residues 490–500 (IGNNKIRGCGG) are cytoplasmic.

It belongs to the Ca(2+):cation antiporter (CaCA) (TC 2.A.19) family. SLC24A subfamily.

It is found in the golgi apparatus. Its subcellular location is the trans-Golgi network membrane. The protein localises to the melanosome. It catalyses the reaction Ca(2+)(out) + K(+)(out) + 4 Na(+)(in) = Ca(2+)(in) + K(+)(in) + 4 Na(+)(out). Functionally, calcium, potassium:sodium antiporter that transports 1 Ca(2+) and 1 K(+) to the melanosome in exchange for 4 cytoplasmic Na(+). Involved in pigmentation, possibly by participating in ion transport in melanosomes. Predominant sodium-calcium exchanger in melanocytes. This chain is Sodium/potassium/calcium exchanger 5, found in Homo sapiens (Human).